Reading from the N-terminus, the 520-residue chain is Catalase easC (520 aa).

H71 is an active-site residue. Residue Y361 coordinates heme.

The protein belongs to the catalase family. Requires heme as cofactor.

It participates in alkaloid biosynthesis; ergot alkaloid biosynthesis. Functionally, catalase; part of the gene cluster that mediates the biosynthesis of fumiclavanine C, a fungal ergot alkaloid. DmaW catalyzes the first step of ergot alkaloid biosynthesis by condensing dimethylallyl diphosphate (DMAP) and tryptophan to form 4-dimethylallyl-L-tryptophan. The second step is catalyzed by the methyltransferase easF that methylates 4-dimethylallyl-L-tryptophan in the presence of S-adenosyl-L-methionine, resulting in the formation of 4-dimethylallyl-L-abrine. The catalase easC and the FAD-dependent oxidoreductase easE then transform 4-dimethylallyl-L-abrine to chanoclavine-I which is further oxidized by EasD in the presence of NAD(+), resulting in the formation of chanoclavine-I aldehyde. EasA reduces chanoclavine-I aldehyde to dihydrochanoclavine-I aldehyde that spontaneously dehydrates to form 6,8-dimethyl-6,7-didehydroergoline. EasG then catalyzes the reduction of 6,8-dimethyl-6,7-didehydroergoline to form festuclavine. Hydrolysis of festuclavine by easM then leads to the formation of fumigaclavine B which is in turn acetylated by easN to fumigaclavine A. Finally, easL catalyzes the conversion of fumigaclavine A into fumigaclavine C by attaching a dimethylallyl moiety to C-2 of the indole nucleus. This Aspergillus fumigatus (strain ATCC MYA-4609 / CBS 101355 / FGSC A1100 / Af293) (Neosartorya fumigata) protein is Catalase easC.